Consider the following 666-residue polypeptide: N-acetylgalactosaminyltransferase 6 (666 aa).

The Cytoplasmic portion of the chain corresponds to 1 to 11 (MRRPNLKWIVK). The helical; Signal-anchor for type II membrane protein transmembrane segment at 12 to 31 (ASLLLLISLTLFVLITSWIS) threads the bilayer. Topologically, residues 32–666 (STPYTNKPVH…NYSQDLVLSL (635 aa)) are lumenal. The interval 90-126 (EPVEEEVDNPHPADDEPQQQPQEELQMAAPADASVKK) is disordered. The span at 107-120 (QQQPQEELQMAAPA) shows a compositional bias: low complexity. N-linked (GlcNAc...) asparagine glycosylation occurs at N181. 5 disulfide bridges follow: C192-C421, C412-C491, C531-C548, C577-C594, and C621-C636. Residues 201–311 (LPTVSVIIIF…YNWLPPLLEP (111 aa)) are catalytic subdomain A. Substrate contacts are provided by D242 and R272. N285 carries N-linked (GlcNAc...) asparagine glycosylation. Residue D295 participates in Mn(2+) binding. S296 contributes to the substrate binding site. Residue H297 coordinates Mn(2+). The tract at residues 367–429 (PFKSPIMAGG…PCSRIGHIYR (63 aa)) is catalytic subdomain B. Position 398 (W398) interacts with substrate. H426 lines the Mn(2+) pocket. A substrate-binding site is contributed by R429. Residues 518 to 648 (AMGALQNVGN…DNRFQQWNFG (131 aa)) form the Ricin B-type lectin domain. N-linked (GlcNAc...) asparagine glycosylation is found at N651 and N657.

Belongs to the glycosyltransferase 2 family. GalNAc-T subfamily. Mn(2+) serves as cofactor. In terms of tissue distribution, expressed during oogenesis, in the somatically derived follicle cells that surround the developing oocyte, which are involved in the maturation of the oocyte and construction of the egg shell, as well as playing a role in subsequent embryonic pattern formation. Expressed in the salivary glands from embryonic stage 12 onwards, becoming stronger at stage 13. During embryonic stages 12-13, also expressed in the posterior midgut and hindgut. During embryonic stages 14-15, expression continues in the hindgut. Expression is detected in the epidermis and antennomaxillary complex during embryonic stages 16-17. In third instar larvae, ubiquitously expressed in wing, eye-antennal, leg and haltere imaginal disks.

The protein localises to the golgi apparatus membrane. The catalysed reaction is L-seryl-[protein] + UDP-N-acetyl-alpha-D-galactosamine = a 3-O-[N-acetyl-alpha-D-galactosaminyl]-L-seryl-[protein] + UDP + H(+). It catalyses the reaction L-threonyl-[protein] + UDP-N-acetyl-alpha-D-galactosamine = a 3-O-[N-acetyl-alpha-D-galactosaminyl]-L-threonyl-[protein] + UDP + H(+). It participates in protein modification; protein glycosylation. In terms of biological role, glycopeptide transferase involved in O-linked oligosaccharide biosynthesis, which catalyzes the transfer of an N-acetyl-D-galactosamine residue to an already glycosylated peptide. In contrast to other proteins of the family, it does not act as a peptide transferase that transfers GalNAc onto serine or threonine residue on the protein receptor, but instead requires the prior addition of a GalNAc on a peptide before adding additional GalNAc moieties. Some peptide transferase activity is however not excluded, considering that its appropriate peptide substrate may remain unidentified. Prefers the diglycosylated Muc5AC-3/13 as substrate. Might have a role in protein O-glycosylation in the Golgi and thereby in establishing and/or maintaining a proper secretory apparatus structure. This Drosophila melanogaster (Fruit fly) protein is N-acetylgalactosaminyltransferase 6.